We begin with the raw amino-acid sequence, 336 residues long: 4-hydroxy-3-methylbut-2-enyl diphosphate reductase (336 aa).

Residue Cys-37 coordinates [4Fe-4S] cluster. 2 residues coordinate (2E)-4-hydroxy-3-methylbut-2-enyl diphosphate: His-66 and His-99. 2 residues coordinate dimethylallyl diphosphate: His-66 and His-99. Isopentenyl diphosphate-binding residues include His-66 and His-99. Cys-121 is a [4Fe-4S] cluster binding site. His-149 lines the (2E)-4-hydroxy-3-methylbut-2-enyl diphosphate pocket. Position 149 (His-149) interacts with dimethylallyl diphosphate. His-149 contributes to the isopentenyl diphosphate binding site. Glu-151 acts as the Proton donor in catalysis. A (2E)-4-hydroxy-3-methylbut-2-enyl diphosphate-binding site is contributed by Thr-189. A [4Fe-4S] cluster-binding site is contributed by Cys-219. (2E)-4-hydroxy-3-methylbut-2-enyl diphosphate contacts are provided by Ser-247, Ser-248, Asn-249, and Ser-292. Residues Ser-247, Ser-248, Asn-249, and Ser-292 each coordinate dimethylallyl diphosphate. Ser-247, Ser-248, Asn-249, and Ser-292 together coordinate isopentenyl diphosphate.

It belongs to the IspH family. Requires [4Fe-4S] cluster as cofactor.

It catalyses the reaction isopentenyl diphosphate + 2 oxidized [2Fe-2S]-[ferredoxin] + H2O = (2E)-4-hydroxy-3-methylbut-2-enyl diphosphate + 2 reduced [2Fe-2S]-[ferredoxin] + 2 H(+). The catalysed reaction is dimethylallyl diphosphate + 2 oxidized [2Fe-2S]-[ferredoxin] + H2O = (2E)-4-hydroxy-3-methylbut-2-enyl diphosphate + 2 reduced [2Fe-2S]-[ferredoxin] + 2 H(+). The protein operates within isoprenoid biosynthesis; dimethylallyl diphosphate biosynthesis; dimethylallyl diphosphate from (2E)-4-hydroxy-3-methylbutenyl diphosphate: step 1/1. Its pathway is isoprenoid biosynthesis; isopentenyl diphosphate biosynthesis via DXP pathway; isopentenyl diphosphate from 1-deoxy-D-xylulose 5-phosphate: step 6/6. Catalyzes the conversion of 1-hydroxy-2-methyl-2-(E)-butenyl 4-diphosphate (HMBPP) into a mixture of isopentenyl diphosphate (IPP) and dimethylallyl diphosphate (DMAPP). Acts in the terminal step of the DOXP/MEP pathway for isoprenoid precursor biosynthesis. The chain is 4-hydroxy-3-methylbut-2-enyl diphosphate reductase from Nocardia farcinica (strain IFM 10152).